The sequence spans 732 residues: Nephrocystin-1 (732 aa).

Residues 3–105 (ARRQRDPLQA…LQGLAVTISR (103 aa)) adopt a coiled-coil conformation. Tyrosine 46 is subject to Phosphotyrosine; by FAK2. Disordered stretches follow at residues 103-153 (ISRE…KWST) and 205-244 (TYLEPYSEEEEGQESSEEGSEEDVEAVDETADGAEVKQRT). 2 stretches are compositionally biased toward acidic residues: residues 115–145 (TEEEEESESEDSEDSGGEEEDAEEEEEEKEE) and 210–236 (YSEEEEGQESSEEGSEEDVEAVDETAD). A phosphoserine; by CK2 mark is found at serine 121, serine 123, and serine 126. A coiled-coil region spans residues 127–150 (EDSGGEEEDAEEEEEEKEENESHK). The 61-residue stretch at 152–212 (STGEEYIAVG…PRTYLEPYSE (61 aa)) folds into the SH3 domain. At tyrosine 349 the chain carries Phosphotyrosine; by FAK2. Tyrosine 721 carries the post-translational modification Phosphotyrosine; by SRC.

The protein belongs to the nephrocystin-1 family. As to quaternary structure, interacts with BCAR1, PTK2B/PYK2 and tensin. Interacts with INVS and NPHP3. Interacts with PACS1; the interaction is dependent on NPHP1 phosphorylation by CK2. Interacts with KIF7. Interacts with AHI1 and TNK2. Interacts with NPHP4 in a complex containing NPHP1, NPHP4 and RPGRIP1L. Interacts with IQCB1; the interaction likely requires additional interactors. Interacts with ANKS3. Interacts with SPATA7. Interacts with FLNA. In terms of processing, phosphorylation by CK2 is required for the interaction with PACS1 and the targeting to the base region of cilia. As to expression, widespread expression, with highest levels in pituitary gland, spinal cord, thyroid gland, testis, skeletal muscle, lymph node and trachea. Weakly expressed in heart, kidney and pancreas. Expressed in nasal epithelial cells (at protein level). Expressed in the renal collecting duct (at protein level).

Its subcellular location is the cell junction. The protein localises to the adherens junction. It localises to the cell projection. The protein resides in the cilium. It is found in the cytoplasm. Its subcellular location is the cytoskeleton. The protein localises to the cilium axoneme. It localises to the tight junction. Its function is as follows. Together with BCAR1 it may play a role in the control of epithelial cell polarity. Involved in the organization of apical junctions in kidney cells together with NPHP4 and RPGRIP1L/NPHP8. Does not seem to be strictly required for ciliogenesis. Seems to help to recruit PTK2B/PYK2 to cell matrix adhesions, thereby initiating phosphorylation of PTK2B/PYK2 and PTK2B/PYK2-dependent signaling. May play a role in the regulation of intraflagellar transport (IFT) during cilia assembly. Required for normal retina development. In connecting photoreceptor cilia influences the movement of some IFT proteins such as IFT88 and WDR19. Involved in spermatogenesis. The sequence is that of Nephrocystin-1 (NPHP1) from Homo sapiens (Human).